Reading from the N-terminus, the 79-residue chain is DNA gyrase inhibitor YacG (79 aa).

4 residues coordinate Zn(2+): Cys-7, Cys-10, Cys-26, and Cys-30.

Belongs to the DNA gyrase inhibitor YacG family. In terms of assembly, interacts with GyrB. Zn(2+) is required as a cofactor.

In terms of biological role, inhibits all the catalytic activities of DNA gyrase by preventing its interaction with DNA. Acts by binding directly to the C-terminal domain of GyrB, which probably disrupts DNA binding by the gyrase. This Shewanella halifaxensis (strain HAW-EB4) protein is DNA gyrase inhibitor YacG.